We begin with the raw amino-acid sequence, 246 residues long: MKYDIIGDIHGCLQEFQNLTEKLGYNWSSGLPIHPDQRKLAFVGDITDRGPHSLRMIEIVWELVIHKKVAYYAPGNHCNKLYRFFLGRNVTIAHGLETTVAEYEALPSHKQNMIKEKFITLYEQSPLYHVLDEKRLLVCHAGIRQDYIGRQDKKVQTFVLYGDITGEKHADGSPVRRDWAKEYKGTTWIVYGHTPVKEPRFVNHTVNIDTGAVFGGKLTGLRYPEMETVSVPSSLPFVPEKFRPIS.

This sequence belongs to the PrpE family. Ni(2+) is required as a cofactor.

It catalyses the reaction P(1),P(4)-bis(5'-guanosyl) tetraphosphate + H2O = GMP + GTP + 2 H(+). Its function is as follows. Asymmetrically hydrolyzes Ap4p to yield AMP and ATP. This chain is Bis(5'-nucleosyl)-tetraphosphatase PrpE [asymmetrical], found in Bacillus thuringiensis subsp. konkukian (strain 97-27).